The chain runs to 180 residues: Large ribosomal subunit protein uL10 (180 aa).

The protein belongs to the universal ribosomal protein uL10 family. Part of the ribosomal stalk of the 50S ribosomal subunit. The N-terminus interacts with L11 and the large rRNA to form the base of the stalk. The C-terminus forms an elongated spine to which L12 dimers bind in a sequential fashion forming a multimeric L10(L12)X complex.

In terms of biological role, forms part of the ribosomal stalk, playing a central role in the interaction of the ribosome with GTP-bound translation factors. This Thermosipho melanesiensis (strain DSM 12029 / CIP 104789 / BI429) protein is Large ribosomal subunit protein uL10.